The primary structure comprises 617 residues: Guanylate cyclase soluble subunit beta-2 (617 aa).

His26 serves as a coordination point for heme. The Guanylate cyclase domain occupies Thr391–Glu519. Basic and acidic residues predominate over residues Arg577–Gly586. The segment at Arg577 to Ser605 is disordered. Over residues Thr588 to Pro604 the composition is skewed to polar residues.

The protein belongs to the adenylyl cyclase class-4/guanylyl cyclase family. In terms of assembly, heterodimer of an alpha and a beta chain. The cofactor is heme. As to expression, expressed in gastric signet ring cell carcinoma, but not in the normal stomach.

It is found in the cytoplasm. The enzyme catalyses GTP = 3',5'-cyclic GMP + diphosphate. With respect to regulation, activated by nitric oxide in the presence of magnesium or manganese ions. The sequence is that of Guanylate cyclase soluble subunit beta-2 (GUCY1B2) from Homo sapiens (Human).